Here is a 445-residue protein sequence, read N- to C-terminus: Ribosomal protein uS12 methylthiotransferase RimO (445 aa).

The MTTase N-terminal domain maps to 6–121 (KKVAVVTLGC…ILETLEEAEK (116 aa)). [4Fe-4S] cluster-binding residues include Cys15, Cys50, Cys84, Cys159, Cys163, and Cys166. One can recognise a Radical SAM core domain in the interval 145-375 (LSPKQYAYVK…MELQHDIAYE (231 aa)). The 68-residue stretch at 378–445 (QRWVGQTLKV…SYDLMGEVVQ (68 aa)) folds into the TRAM domain.

The protein belongs to the methylthiotransferase family. RimO subfamily. [4Fe-4S] cluster is required as a cofactor.

It is found in the cytoplasm. It catalyses the reaction L-aspartate(89)-[ribosomal protein uS12]-hydrogen + (sulfur carrier)-SH + AH2 + 2 S-adenosyl-L-methionine = 3-methylsulfanyl-L-aspartate(89)-[ribosomal protein uS12]-hydrogen + (sulfur carrier)-H + 5'-deoxyadenosine + L-methionine + A + S-adenosyl-L-homocysteine + 2 H(+). Catalyzes the methylthiolation of an aspartic acid residue of ribosomal protein uS12. This Desulfitobacterium hafniense (strain Y51) protein is Ribosomal protein uS12 methylthiotransferase RimO.